The chain runs to 990 residues: Presequence protease, mitochondrial (990 aa).

Residues 1–25 (MLRLKSLKKPVQAVVRRFATTSAPT) constitute a mitochondrion transit peptide. His-89 is a binding site for Zn(2+). Glu-92 serves as the catalytic Proton acceptor. His-93 is a binding site for Zn(2+). Residue Glu-165 is part of the active site. Glu-190 serves as a coordination point for Zn(2+).

It belongs to the peptidase M16 family. PreP subfamily. Monomer and homodimer; homodimerization is induced by binding of the substrate. It depends on Zn(2+) as a cofactor.

The protein resides in the mitochondrion intermembrane space. The protein localises to the mitochondrion matrix. Functionally, degrades mitochondrial transit peptides after their cleavage in the intermembrane space or in the matrix, and presequence peptides; clearance of these peptides is required to keep the presequence processing machinery running. Preferentially cleaves the N-terminal side of paired basic amino acid residues. Also degrades other unstructured peptides. May function as an ATP-dependent peptidase as opposed to a metalloendopeptidase. In Yarrowia lipolytica (strain CLIB 122 / E 150) (Yeast), this protein is Presequence protease, mitochondrial (CYM1).